Here is a 370-residue protein sequence, read N- to C-terminus: Histidinol-phosphate aminotransferase 2 (370 aa).

K230 is modified (N6-(pyridoxal phosphate)lysine).

It belongs to the class-II pyridoxal-phosphate-dependent aminotransferase family. Histidinol-phosphate aminotransferase subfamily. In terms of assembly, homodimer. It depends on pyridoxal 5'-phosphate as a cofactor.

The catalysed reaction is L-histidinol phosphate + 2-oxoglutarate = 3-(imidazol-4-yl)-2-oxopropyl phosphate + L-glutamate. Its pathway is amino-acid biosynthesis; L-histidine biosynthesis; L-histidine from 5-phospho-alpha-D-ribose 1-diphosphate: step 7/9. The polypeptide is Histidinol-phosphate aminotransferase 2 (Pseudomonas fluorescens (strain ATCC BAA-477 / NRRL B-23932 / Pf-5)).